A 232-amino-acid chain; its full sequence is Ribose-5-phosphate isomerase A (232 aa).

Substrate-binding positions include 31–34, 88–91, and 101–104; these read TGST, DGAD, and KGGG. Glu-110 functions as the Proton acceptor in the catalytic mechanism. Lys-128 is a binding site for substrate.

Belongs to the ribose 5-phosphate isomerase family. In terms of assembly, homodimer.

The enzyme catalyses aldehydo-D-ribose 5-phosphate = D-ribulose 5-phosphate. The protein operates within carbohydrate degradation; pentose phosphate pathway; D-ribose 5-phosphate from D-ribulose 5-phosphate (non-oxidative stage): step 1/1. In terms of biological role, catalyzes the reversible conversion of ribose-5-phosphate to ribulose 5-phosphate. This chain is Ribose-5-phosphate isomerase A, found in Lactobacillus gasseri (strain ATCC 33323 / DSM 20243 / BCRC 14619 / CIP 102991 / JCM 1131 / KCTC 3163 / NCIMB 11718 / NCTC 13722 / AM63).